A 144-amino-acid chain; its full sequence is Large ribosomal subunit protein uL15 (144 aa).

Residues 1–52 (MIKLESLQDPSPRKRRKKLLGRGPGSGHGKTSGRGHKGDGSRSGYKRRFGYE) are disordered. The span at 22 to 32 (RGPGSGHGKTS) shows a compositional bias: gly residues.

Belongs to the universal ribosomal protein uL15 family. Part of the 50S ribosomal subunit.

Binds to the 23S rRNA. This chain is Large ribosomal subunit protein uL15, found in Chlamydia felis (strain Fe/C-56) (Chlamydophila felis).